Consider the following 570-residue polypeptide: MIPPEIRRSVLLQKAIKLALAGTLLTFASFSATAADPSSDTETPQPPDILLGPLFNDVQNAKLFPDQKTFADAIPNSDPLMILADYRMQRNQSGFDLRHFVDVNFTLPKAGEKYVPPAGQSLREHIDGLWPVLTRSTKNVEKWDSLLPLPESYVVPGGRFREIYYWDSYFTMLGLAESGHWDKVADMVANFGYEIDAWGHIPNGNRTYYLSRSQPPFFAFMIELLAQHEGDDALKEYLPQLQKEYAYWMEGVETLQPGQQNQRVVKLEDGSVLNRYWDDRDTPRPESWVEDIATAKSNPNRPATEIYRDLRSAAASGWDFSSRWMDNPQQLSTIRTTTIVPVDLNALLYQLEKTLARASAAAGDRAEASQYDALANARQKAIEMHLWNNKEGWYADYDLQNNKIRDQLTAAALFPLYVNAAAKDRAVKVAAAAQAHLLQPGGLATTSVKSGQQWDAPNGWAPLQWVAAEGLQNYGQDDVAMEVTWRFLTNVQHTYDREKKLVEKYDVSSTGTGGGGGEYPLQDGFGWTNGVTLKMLDLICPQEKPCDSVPSTRPASLSATPTKTPSAATQ.

The first 34 residues, 1–34, serve as a signal peptide directing secretion; it reads MIPPEIRRSVLLQKAIKLALAGTLLTFASFSATA. Residues Arg-159, 166 to 167, Asn-203, 212 to 214, 284 to 286, and Gly-317 contribute to the substrate site; these read WD, RSQ, and RPE. Active-site proton donor/acceptor residues include Asp-319 and Glu-503. Glu-518 provides a ligand contact to substrate. Residues 544–570 form a disordered region; it reads KPCDSVPSTRPASLSATPTKTPSAATQ. The segment covering 554 to 570 has biased composition (low complexity); that stretch reads PASLSATPTKTPSAATQ.

The protein belongs to the glycosyl hydrolase 37 family. As to quaternary structure, monomer.

It localises to the periplasm. It catalyses the reaction alpha,alpha-trehalose + H2O = alpha-D-glucose + beta-D-glucose. Its function is as follows. Provides the cells with the ability to utilize trehalose at high osmolarity by splitting it into glucose molecules that can subsequently be taken up by the phosphotransferase-mediated uptake system. This Salmonella schwarzengrund (strain CVM19633) protein is Periplasmic trehalase.